The following is a 358-amino-acid chain: Probable tartrate dehydrogenase/decarboxylase TtuC' (358 aa).

Residues Asp222, Asp246, and Asp250 each coordinate Mn(2+).

This sequence belongs to the isocitrate and isopropylmalate dehydrogenases family. Mg(2+) serves as cofactor. The cofactor is Mn(2+). K(+) is required as a cofactor.

The protein localises to the cytoplasm. The enzyme catalyses tartrate + NAD(+) = 2-hydroxy-3-oxosuccinate + NADH + H(+). The catalysed reaction is (2R,3S)-tartrate + NAD(+) = 2-hydroxy-3-oxosuccinate + NADH + H(+). It catalyses the reaction (2R,3R)-tartrate + NAD(+) = 2-hydroxy-3-oxosuccinate + NADH + H(+). It carries out the reaction (2R,3R)-tartrate + H(+) = (R)-glycerate + CO2. The enzyme catalyses (R)-malate + NAD(+) = pyruvate + CO2 + NADH. It functions in the pathway carbohydrate acid metabolism; tartrate degradation; 2-hydroxy-3-oxosuccinate from L-tartrate: step 1/1. The protein operates within carbohydrate acid metabolism; tartrate degradation; 2-hydroxy-3-oxosuccinate from meso-tartrate: step 1/1. Its pathway is carbohydrate acid metabolism; tartrate degradation; D-glycerate from L-tartrate: step 1/1. Functionally, has multiple catalytic activities. Apart from catalyzing the oxidation of (+)-tartrate to oxaloglycolate, also converts meso-tartrate to D-glycerate and catalyzes the oxidative decarboxylation of D-malate to pyruvate. The protein is Probable tartrate dehydrogenase/decarboxylase TtuC' (ttuC') of Agrobacterium vitis (Rhizobium vitis).